The sequence spans 1209 residues: MTVPKEIPEKWARAGAPPSWSQKKPSWGTEEERRARANDREYNEKFQYASNCIKTSKYNIVTFLPVNLFEQFQEVANTYFLFLLILQLIPQISSLSWFTTIVPLVLVLTITAVKDATDDYFRHKSDNQVNNRHSQVLINGVLQQEQWMNVCVGDIIKLENNQFVAADLLLLSSSEPHGLCYIETAELDGETNMKVRQAIPVTSELGDVSQLARFDGEVICEPPNNKLDKFSGTLYWKENKFPLSNQNMLLRGCVLRNTEWCFGLVIFAGPDTKLMQNSGRTKFKRTSIDRLMNTLVLWIFGFLVCMGVILAIGNAIWEHEVGTRFQVYLPWDEAVDSAFFSGFLSFWSYIIILNTVVPISLYVSVEVIRLGHSYFINWDKKMFCMKKRTPAEARTTTLNEELGQVEYIFSDKTGTLTQNIMVFNKCSINGHSYGDVFDVLGHKAELGERPEPVDFSFNPLADKKFLFWDSSLLEAVKMGDPHTHEFFRLLSLCHTVMSEEKNEGELYYKAQSPDEGALVTAARNFGFVFRSRTPKTITVHELGTAITYQLLAILDFNNIRKRMSVIVRNPEGKIRLYCKGADTILLDRLHPPTQELLSSTTDHLNEYAGDGLRTLVLAYKDLDEEYYEEWARRRLQASLAQDSREDRLASIYEEVESDMMLLGATAIEDKLQQGVPETIALLTLANIKIWVLTGDKQETAVNIGYSCKMLTDDMTEVFVVTGHTVLEVREELRKARKKMVDSSHAVGNGFTYQGNLSSSKLTSVLEAVAGEYALVINGHSLAHALEADMELEFLETACACKAVICCRVTPLQKAQVVELVKKYKKAVTLAIGDGANDVSMIKTAHIGVGISGQEGIQAVLASDYSFSQFKFLQRLLLVHGRWSYLRMCKFLCYFFYKNFAFTMVHFWFGFFCGFSAQTVYDQYFITLYNIVYTSLPVLAMGVFDQDVPEQRSMEYPKLYEPGQLNLLFNKREFFICIAQGIYTSVLMFFIPYGVFAEATRDDGTQLADYQSFAVTVATSLVIVVSVQIGLDTGYWTAINHFFIWGSLAVYFAILFAMHSNGLFDMFPNQFRFVGNAQNTLAQPTVWLTIALTTAVCIMPVVAFRFLRLSLKPDLSDTVRYTQLVRKKQKAQHRCMRRVGRTGSRRSGYAFSHQEGFGELIMSGKNMRLSSLALSSFSTRSSSSWIESLRRKKSDSANSPSGGAEKPLKG.

Residues 1-68 lie on the Cytoplasmic side of the membrane; the sequence is MTVPKEIPEK…NIVTFLPVNL (68 aa). The disordered stretch occupies residues 12 to 36; sequence ARAGAPPSWSQKKPSWGTEEERRAR. The helical transmembrane segment at 69–89 threads the bilayer; that stretch reads FEQFQEVANTYFLFLLILQLI. Over 90–91 the chain is Exoplasmic loop; sequence PQ. The chain crosses the membrane as a helical span at residues 92-112; sequence ISSLSWFTTIVPLVLVLTITA. At 113 to 295 the chain is on the cytoplasmic side; it reads VKDATDDYFR…TSIDRLMNTL (183 aa). Residues 296–316 form a helical membrane-spanning segment; sequence VLWIFGFLVCMGVILAIGNAI. The Exoplasmic loop portion of the chain corresponds to 317–338; the sequence is WEHEVGTRFQVYLPWDEAVDSA. A helical membrane pass occupies residues 339 to 359; it reads FFSGFLSFWSYIIILNTVVPI. Residues 360–898 are Cytoplasmic-facing; sequence SLYVSVEVIR…KFLCYFFYKN (539 aa). D411 acts as the 4-aspartylphosphate intermediate in catalysis. The ATP site is built by D411, K412, T413, E515, F556, K579, R613, T693, G694, D695, R807, and K813. Residue D411 coordinates Mg(2+). Residue T413 coordinates Mg(2+). D833 contributes to the Mg(2+) binding site. Residues N836 and D837 each contribute to the ATP site. D837 contacts Mg(2+). The chain crosses the membrane as a helical span at residues 899–919; that stretch reads FAFTMVHFWFGFFCGFSAQTV. Residues 920–922 are Exoplasmic loop-facing; sequence YDQ. The chain crosses the membrane as a helical span at residues 923-943; that stretch reads YFITLYNIVYTSLPVLAMGVF. Residues 944–972 are Cytoplasmic-facing; the sequence is DQDVPEQRSMEYPKLYEPGQLNLLFNKRE. A helical membrane pass occupies residues 973 to 993; it reads FFICIAQGIYTSVLMFFIPYG. Residues 994–1011 lie on the Exoplasmic loop side of the membrane; that stretch reads VFAEATRDDGTQLADYQS. The chain crosses the membrane as a helical span at residues 1012–1032; the sequence is FAVTVATSLVIVVSVQIGLDT. The Cytoplasmic portion of the chain corresponds to 1033 to 1036; the sequence is GYWT. The helical transmembrane segment at 1037–1057 threads the bilayer; that stretch reads AINHFFIWGSLAVYFAILFAM. Topologically, residues 1058 to 1082 are exoplasmic loop; that stretch reads HSNGLFDMFPNQFRFVGNAQNTLAQ. Residues 1083 to 1103 traverse the membrane as a helical segment; that stretch reads PTVWLTIALTTAVCIMPVVAF. Over 1104–1209 the chain is Cytoplasmic; it reads RFLRLSLKPD…SGGAEKPLKG (106 aa). S1175 bears the Phosphoserine mark. Positions 1179–1209 are disordered; the sequence is RSSSSWIESLRRKKSDSANSPSGGAEKPLKG.

It belongs to the cation transport ATPase (P-type) (TC 3.A.3) family. Type IV subfamily. In terms of assembly, component of a P4-ATPase flippase complex which consists of a catalytic alpha subunit ATP8B2 and an accessory beta subunit TMEM30A or TMEM30B. Mg(2+) is required as a cofactor. In terms of tissue distribution, expressed in brain and testes (at protein level).

It is found in the cell membrane. The protein localises to the endoplasmic reticulum membrane. It carries out the reaction ATP + H2O + phospholipidSide 1 = ADP + phosphate + phospholipidSide 2.. The enzyme catalyses a 1,2-diacyl-sn-glycero-3-phosphocholine(out) + ATP + H2O = a 1,2-diacyl-sn-glycero-3-phosphocholine(in) + ADP + phosphate + H(+). Its function is as follows. Catalytic component of P4-ATPase flippase complex, which catalyzes the hydrolysis of ATP coupled to the transport of phosphatidylcholine (PC) from the outer to the inner leaflet of the plasma membrane. May contribute to the maintenance of membrane lipid asymmetry. In Mus musculus (Mouse), this protein is Phospholipid-transporting ATPase ID.